A 533-amino-acid polypeptide reads, in one-letter code: Subtilisin-like serine protease pepC (533 aa).

An N-terminal signal peptide occupies residues 1 to 16 (MKGILGLSLLPLLTAA). Residues 43 to 136 (SYIVVFKKHV…IERDSEVHTM (94 aa)) form the Inhibitor I9 domain. The region spanning 145–450 (PWGLARISHR…VGIYKRNELT (306 aa)) is the Peptidase S8 domain. Residues aspartate 181 and histidine 213 each act as charge relay system in the active site. N-linked (GlcNAc...) asparagine glycosylation occurs at asparagine 283. Residues cysteine 320 and cysteine 351 are joined by a disulfide bond. Serine 379 (charge relay system) is an active-site residue. N-linked (GlcNAc...) asparagine glycosylation occurs at asparagine 435. The span at 496-513 (KSCSPRSLVPSTARSRMP) shows a compositional bias: polar residues. The disordered stretch occupies residues 496–519 (KSCSPRSLVPSTARSRMPSSHRSE).

This sequence belongs to the peptidase S8 family.

This chain is Subtilisin-like serine protease pepC (pepC), found in Aspergillus niger.